The following is a 921-amino-acid chain: Translation initiation factor IF-2 (921 aa).

Residues 1–296 form a disordered region; the sequence is MADQNTPGDK…PGPQKQRGRL (296 aa). The segment covering 80–89 has biased composition (low complexity); that stretch reads RPSGPRPSGG. Over residues 117 to 183 the composition is skewed to basic and acidic residues; that stretch reads ARVRDLEERR…AKKRFGEGEA (67 aa). Composition is skewed to low complexity over residues 184–237 and 248–257; these read PRPA…ARPA and GRAPAAVAAG. Residues 417–586 form the tr-type G domain; sequence PRSPVVTVMG…MIALQADILD (170 aa). The interval 426 to 433 is G1; the sequence is GHVDHGKT. 426–433 lines the GTP pocket; the sequence is GHVDHGKT. Residues 451–455 are G2; it reads GITQH. The G3 stretch occupies residues 474–477; it reads DTPG. Residues 474–478 and 528–531 contribute to the GTP site; these read DTPGH and NKID. The segment at 528–531 is G4; that stretch reads NKID. A G5 region spans residues 564-566; sequence SAK.

It belongs to the TRAFAC class translation factor GTPase superfamily. Classic translation factor GTPase family. IF-2 subfamily.

The protein localises to the cytoplasm. Functionally, one of the essential components for the initiation of protein synthesis. Protects formylmethionyl-tRNA from spontaneous hydrolysis and promotes its binding to the 30S ribosomal subunits. Also involved in the hydrolysis of GTP during the formation of the 70S ribosomal complex. In Bradyrhizobium sp. (strain ORS 278), this protein is Translation initiation factor IF-2.